The primary structure comprises 324 residues: Cytosolic sulfotransferase 13 (324 aa).

Residue 76–81 (KSGTTW) participates in 3'-phosphoadenylyl sulfate binding. His-134 (proton acceptor) is an active-site residue. Residues Arg-156, Ser-164, Tyr-222, and 288-290 (RKG) contribute to the 3'-phosphoadenylyl sulfate site.

This sequence belongs to the sulfotransferase 1 family.

The protein resides in the cytoplasm. Functionally, sulfotransferase that utilizes 3'-phospho-5'-adenylyl sulfate (PAPS) as sulfonate donor. This is Cytosolic sulfotransferase 13 (SOT13) from Arabidopsis thaliana (Mouse-ear cress).